Consider the following 664-residue polypeptide: uncharacterized protein (664 aa).

The signal sequence occupies residues 1-25 (MSWKRYLKWVSFAIIPLLFANTSIK). Residues 625-645 (IIVYLIIGFSVLVLFITVFIY) form a helical membrane-spanning segment.

It belongs to the MG414/MG415 family.

It localises to the cell membrane. This is an uncharacterized protein from Mycoplasma genitalium (strain ATCC 33530 / DSM 19775 / NCTC 10195 / G37) (Mycoplasmoides genitalium).